Reading from the N-terminus, the 192-residue chain is Ion-translocating oxidoreductase complex subunit A (192 aa).

6 helical membrane passes run leucine 5–leucine 25, isoleucine 39–valine 59, leucine 72–valine 92, alanine 102–leucine 122, alanine 134–methionine 154, and alanine 171–valine 191.

Belongs to the NqrDE/RnfAE family. The complex is composed of six subunits: RnfA, RnfB, RnfC, RnfD, RnfE and RnfG.

Its subcellular location is the cell inner membrane. Its function is as follows. Part of a membrane-bound complex that couples electron transfer with translocation of ions across the membrane. In Shewanella loihica (strain ATCC BAA-1088 / PV-4), this protein is Ion-translocating oxidoreductase complex subunit A.